The sequence spans 78 residues: ATP synthase subunit c (78 aa).

Helical transmembrane passes span 11-31 (FIGA…VGHV) and 53-73 (LFVG…IALL).

It belongs to the ATPase C chain family. F-type ATPases have 2 components, F(1) - the catalytic core - and F(0) - the membrane proton channel. F(1) has five subunits: alpha(3), beta(3), gamma(1), delta(1), epsilon(1). F(0) has four main subunits: a(1), b(1), b'(1) and c(10-14). The alpha and beta chains form an alternating ring which encloses part of the gamma chain. F(1) is attached to F(0) by a central stalk formed by the gamma and epsilon chains, while a peripheral stalk is formed by the delta, b and b' chains.

It localises to the cell inner membrane. Functionally, f(1)F(0) ATP synthase produces ATP from ADP in the presence of a proton or sodium gradient. F-type ATPases consist of two structural domains, F(1) containing the extramembraneous catalytic core and F(0) containing the membrane proton channel, linked together by a central stalk and a peripheral stalk. During catalysis, ATP synthesis in the catalytic domain of F(1) is coupled via a rotary mechanism of the central stalk subunits to proton translocation. In terms of biological role, key component of the F(0) channel; it plays a direct role in translocation across the membrane. A homomeric c-ring of between 10-14 subunits forms the central stalk rotor element with the F(1) delta and epsilon subunits. This Cereibacter sphaeroides (strain ATCC 17025 / ATH 2.4.3) (Rhodobacter sphaeroides) protein is ATP synthase subunit c.